Reading from the N-terminus, the 192-residue chain is dITP/XTP pyrophosphatase (192 aa).

Threonine 12–lysine 17 contributes to the substrate binding site. Residues glutamate 41 and aspartate 70 each contribute to the Mg(2+) site. Aspartate 70 serves as the catalytic Proton acceptor. Substrate is bound by residues serine 71, phenylalanine 145–aspartate 148, lysine 168, and histidine 173–arginine 174.

Belongs to the HAM1 NTPase family. As to quaternary structure, homodimer. Mg(2+) serves as cofactor.

The catalysed reaction is XTP + H2O = XMP + diphosphate + H(+). It carries out the reaction dITP + H2O = dIMP + diphosphate + H(+). The enzyme catalyses ITP + H2O = IMP + diphosphate + H(+). Pyrophosphatase that catalyzes the hydrolysis of nucleoside triphosphates to their monophosphate derivatives, with a high preference for the non-canonical purine nucleotides XTP (xanthosine triphosphate), dITP (deoxyinosine triphosphate) and ITP. Seems to function as a house-cleaning enzyme that removes non-canonical purine nucleotides from the nucleotide pool, thus preventing their incorporation into DNA/RNA and avoiding chromosomal lesions. This chain is dITP/XTP pyrophosphatase, found in Saccharolobus solfataricus (strain ATCC 35092 / DSM 1617 / JCM 11322 / P2) (Sulfolobus solfataricus).